The primary structure comprises 501 residues: Lysine--tRNA ligase (501 aa).

2 residues coordinate Mg(2+): Glu-404 and Glu-411.

It belongs to the class-II aminoacyl-tRNA synthetase family. Homodimer. Mg(2+) is required as a cofactor.

It localises to the cytoplasm. It carries out the reaction tRNA(Lys) + L-lysine + ATP = L-lysyl-tRNA(Lys) + AMP + diphosphate. This chain is Lysine--tRNA ligase, found in Campylobacter jejuni subsp. doylei (strain ATCC BAA-1458 / RM4099 / 269.97).